We begin with the raw amino-acid sequence, 789 residues long: Aryl hydrocarbon receptor nuclear translocator (789 aa).

A compositionally biased stretch (polar residues) spans 1-14; the sequence is MAATTANPEMTSDV. Positions 1–97 are disordered; it reads MAATTANPEM…RLARENHSEI (97 aa). Residue Ala-2 is modified to N-acetylalanine. Gly residues predominate over residues 26–35; sequence SGPGIQGGGA. Residue Lys-58 forms a Glycyl lysine isopeptide (Lys-Gly) (interchain with G-Cter in SUMO2) linkage. Positions 60–97 are enriched in basic and acidic residues; the sequence is LRCDDDQMSNDKERFARSDDEQSSADKERLARENHSEI. Ser-77 carries the phosphoserine modification. Positions 88-128 are DNA-binding; that stretch reads RLARENHSEIERRRRNKMTAYITELSDMVPTCSALARKPDK. In terms of domain architecture, bHLH spans 89–142; sequence LARENHSEIERRRRNKMTAYITELSDMVPTCSALARKPDKLTILRMAVSHMKSL. The required for heterodimer formation with HIF1A stretch occupies residues 112–168; that stretch reads LSDMVPTCSALARKPDKLTILRMAVSHMKSLRGTGNTSTDGSYKPSFLTDQELKHLI. Positions 112-264 are required for heterodimer formation with EPAS1; it reads LSDMVPTCSA…MCMGSRRSFI (153 aa). PAS domains are found at residues 161–235 and 349–419; these read DQEL…LTGR and PNCT…VKLK. Residues 167-171 form a mediates the transcription activity and dimerization of the AHR:ARNT complex region; it reads LILEA. A PAC domain is found at 424-467; it reads SVMFRFRSKNQEWLWMRTSSFTFQNPYSDEIEYIICTNTNVKNS. The segment covering 465 to 481 has biased composition (polar residues); the sequence is KNSSQEPRPTLSNTIQR. Disordered regions lie at residues 465-492 and 672-789; these read KNSS…NLPL and TPSS…PFSE. Residues 672 to 696 are compositionally biased toward low complexity; that stretch reads TPSSFSSMSLPGAPTASPGAAAYPS. Residues 708–719 show a composition bias toward polar residues; the sequence is TGQTAGQFQTRT. Composition is skewed to low complexity over residues 723-733 and 743-756; these read VGVWPQWQGQQ and QHVQ…PGQP.

In terms of assembly, monomer. Homodimer only upon binding to a DNA. Efficient DNA binding requires dimerization with another bHLH protein. Interacts with TACC3. Interacts with HIF1A, EPAS1, NPAS1 and NPAS3; forms a heterodimer that binds core DNA sequence 5'-TACGTG-3' within the hypoxia response element (HRE) of target gene promoters. Forms a heterodimer with AHRR, as well as with other bHLH proteins. Interacts with NOCA7. Interacts with TACC3. Interacts with AHR; the heterodimer ARNT:AHR binds to core DNA sequence 5'-TGCGTG-3' within the dioxin response element (DRE) of target gene promoters and activates their transcription. Interacts with SIM1 and NPAS4.

The protein resides in the nucleus. Its function is as follows. Required for activity of the AHR. Upon ligand binding, AHR translocates into the nucleus, where it heterodimerizes with ARNT and induces transcription by binding to xenobiotic response elements (XRE). Not required for the ligand-binding subunit to translocate from the cytosol to the nucleus after ligand binding. The complex initiates transcription of genes involved in the regulation of a variety of biological processes, including angiogenesis, hematopoiesis, drug and lipid metabolism, cell motility and immune modulation. The heterodimer binds to core DNA sequence 5'-TACGTG-3' within the hypoxia response element (HRE) of target gene promoters and functions as a transcriptional regulator of the adaptive response to hypoxia. The heterodimer ARNT:AHR binds to core DNA sequence 5'-TGCGTG-3' within the dioxin response element (DRE) of target gene promoters and activates their transcription. This Homo sapiens (Human) protein is Aryl hydrocarbon receptor nuclear translocator.